The chain runs to 1410 residues: Pogo transposable element with ZNF domain (1410 aa).

The disordered stretch occupies residues 238 to 291 (RSTVPQSQSQQTKSTPSTSTTPTATQPTSLGQLAVQSPGQSNQTTNPKLAPSFP). The span at 239–266 (STVPQSQSQQTKSTPSTSTTPTATQPTS) shows a compositional bias: low complexity. A compositionally biased stretch (polar residues) spans 267 to 284 (LGQLAVQSPGQSNQTTNP). Residue Lys319 forms a Glycyl lysine isopeptide (Lys-Gly) (interchain with G-Cter in SUMO2) linkage. The interval 332–361 (QSPGPVVVSNNSSAHGSQRTSGPESSMKVT) is disordered. At Ser333 the chain carries Phosphoserine. The segment covering 345-361 (AHGSQRTSGPESSMKVT) has biased composition (polar residues). A Glycyl lysine isopeptide (Lys-Gly) (interchain with G-Cter in SUMO2) cross-link involves residue Lys359. Residue Ser363 is modified to Phosphoserine. Residues 375–397 (KICPRCNAQFRVTEALRGHMCYC) form a C2H2-type 1; atypical zinc finger. The tract at residues 409–456 (KSLDSEPSVPSAAKPPSPEKTAPVASTPSSTPIPALSPPTKVPEPNEN) is disordered. Lys422 participates in a covalent cross-link: Glycyl lysine isopeptide (Lys-Gly) (interchain with G-Cter in SUMO2). Residue Ser425 is modified to Phosphoserine. Phosphothreonine is present on Thr439. Ser445 carries the phosphoserine modification. Lys449 participates in a covalent cross-link: Glycyl lysine isopeptide (Lys-Gly) (interchain with G-Cter in SUMO2). Thr463 carries the phosphothreonine modification. A Glycyl lysine isopeptide (Lys-Gly) (interchain with G-Cter in SUMO2) cross-link involves residue Lys489. C2H2-type zinc fingers lie at residues 494–516 (FRCP…MKHH), 530–553 (TICQ…ENVH), 560–583 (TKCK…KDTH), 590–613 (YVCQ…RMIH), 619–641 (LLCP…YMRH), and 647–670 (YHCN…LQHH). Lys629 is covalently cross-linked (Glycyl lysine isopeptide (Lys-Gly) (interchain with G-Cter in SUMO2)). A Glycyl lysine isopeptide (Lys-Gly) (interchain with G-Cter in SUMO2) cross-link involves residue Lys677. The tract at residues 693-715 (SRGQPRTVPVSSNDTPPSALQEA) is disordered. Positions 701–710 (PVSSNDTPPS) are enriched in polar residues. The segment at 771–794 (VHCSLCRYSTCCSRAYANHMINNH) adopts a C2H2-type 8 zinc-finger fold. Lys801 is covalently cross-linked (Glycyl lysine isopeptide (Lys-Gly) (interchain with G-Cter in SUMO2)). The required for interaction with CBX5 stretch occupies residues 810–850 (VSGIKLACTSCTFVTSVGDAMAKHLVFNPSHRSSSILPRGL). The C2H2-type 9 zinc finger occupies 815–840 (LACTSCTFVTSVGDAMAKHLVFNPSH). The residue at position 856 (Ser856) is a Phosphoserine. Disordered stretches follow at residues 857-927 (RHGQ…PQAL) and 942-969 (VDDQ…GVGK). Basic and acidic residues predominate over residues 860–870 (QTRDRVHDRNV). A Glycyl lysine isopeptide (Lys-Gly) (interchain with G-Cter in SUMO2) cross-link involves residue Lys883. Positions 892 to 915 (ATPAEPEELLTPLAPALPSPASTA) are enriched in low complexity. One can recognise an HTH CENPB-type domain in the interval 1015–1085 (GENLEGKYLS…MLRHHLTPHA (71 aa)). Residues 1117-1323 (LPLSMIVAID…DCPELVQRSF (207 aa)) enclose the DDE-1 domain. Ser1338 is subject to Phosphoserine. Residues 1340-1360 (TRNADMQEELIASLEEQLKLS) are a coiled coil. Residues 1360 to 1400 (SGEHSESSTPRPRSSPEETIEPESLHQLFEGESETESFYGF) are disordered. 2 positions are modified to phosphoserine: Ser1364 and Ser1367. Residue Thr1368 is modified to Phosphothreonine. A phosphoserine mark is found at Ser1373 and Ser1374. Thr1378 bears the Phosphothreonine mark. Positions 1380-1404 (EPESLHQLFEGESETESFYGFEEAD) match the Integrase domain-binding motif (IBM) motif. Residue Ser1392 is modified to Phosphoserine; by CK2. Thr1394 carries the post-translational modification Phosphothreonine. Residue Ser1396 is modified to Phosphoserine; by CK2.

In terms of assembly, interacts with CBX1, CBX3, MAD2L2 and CHAMP1. Interacts with CBX5; POGZ competes with PXVXL motif-containing proteins such as INCENP and TRIM28 for interaction with CBX5. Interacts (via IBM motif) with PSIP1 isoform 1 (via IBD domain); phosphorylation increases its affinity for PSIP1. Interacts with HDGFL2. In terms of processing, phosphorylation increases its interaction with PSIP1.

It localises to the nucleus. The protein resides in the chromosome. It is found in the cytoplasm. Its function is as follows. Plays a role in mitotic cell cycle progression and is involved in kinetochore assembly and mitotic sister chromatid cohesion. Probably through its association with CBX5 plays a role in mitotic chromosome segregation by regulating aurora kinase B/AURKB activation and AURKB and CBX5 dissociation from chromosome arms. Promotes the repair of DNA double-strand breaks through the homologous recombination pathway. This is Pogo transposable element with ZNF domain (POGZ) from Homo sapiens (Human).